The sequence spans 369 residues: Eukaryotic translation initiation factor 3 subunit F (369 aa).

An MPN domain is found at 31 to 170; sequence VNIQPQAVFS…TKTYISAPVA (140 aa). Over residues 309–334 the composition is skewed to basic and acidic residues; that stretch reads LDEGKEGGEKKDGEGAEGDKKTDGQR. Positions 309-369 are disordered; the sequence is LDEGKEGGEK…EPREPREAAE (61 aa). Gly residues predominate over residues 335–353; sequence GQRGQGGKRGGRSGGAGGR. Positions 354–369 are enriched in basic and acidic residues; it reads GGREQREPREPREAAE.

This sequence belongs to the eIF-3 subunit F family. Component of the eukaryotic translation initiation factor 3 (eIF-3) complex.

Its subcellular location is the cytoplasm. In terms of biological role, component of the eukaryotic translation initiation factor 3 (eIF-3) complex, which is involved in protein synthesis of a specialized repertoire of mRNAs and, together with other initiation factors, stimulates binding of mRNA and methionyl-tRNAi to the 40S ribosome. The eIF-3 complex specifically targets and initiates translation of a subset of mRNAs involved in cell proliferation. In Neurospora crassa (strain ATCC 24698 / 74-OR23-1A / CBS 708.71 / DSM 1257 / FGSC 987), this protein is Eukaryotic translation initiation factor 3 subunit F.